We begin with the raw amino-acid sequence, 626 residues long: Colicin-Ib (626 aa).

Over residues 276-286 (QQLTQQKNTPD) the composition is skewed to polar residues. The disordered stretch occupies residues 276–308 (QQLTQQKNTPDGKTIVSPEKFPGRSSTNHSIVV). A helical membrane pass occupies residues 588-612 (FSVMLGTPVGILGFAIIMAAVSALV).

The protein belongs to the channel forming colicin family.

It is found in the host membrane. Functionally, this colicin is a channel-forming colicin. This class of transmembrane toxins depolarize the cytoplasmic membrane, leading to dissipation of cellular energy. Its function is as follows. Colicins are polypeptide toxins produced by and active against E.coli and closely related bacteria. The polypeptide is Colicin-Ib (cib) (Escherichia coli).